The sequence spans 296 residues: Prostate androgen-regulated mucin-like protein 1 homolog (296 aa).

Residues methionine 1–glycine 20 form the signal peptide. Over serine 21–serine 244 the chain is Extracellular. N-linked (GlcNAc...) asparagine glycans are attached at residues asparagine 61 and asparagine 95. A disordered region spans residues leucine 72 to valine 220. Positions threonine 78 to asparagine 95 are enriched in basic and acidic residues. Polar residues predominate over residues serine 96–aspartate 110. The segment covering leucine 139 to serine 167 has biased composition (low complexity). The segment covering histidine 168 to proline 177 has biased composition (polar residues). Asparagine 169 is a glycosylation site (N-linked (GlcNAc...) asparagine). A compositionally biased stretch (basic and acidic residues) spans valine 206–proline 217. The chain crosses the membrane as a helical span at residues isoleucine 245 to tyrosine 265. Residues leucine 266–serine 296 lie on the Cytoplasmic side of the membrane. At serine 284 the chain carries Phosphoserine.

Belongs to the PARM family. In terms of processing, highly N-glycosylated and O-glycosylated.

The protein localises to the cell membrane. Its subcellular location is the golgi apparatus membrane. The protein resides in the endosome membrane. Functionally, may regulate TLP1 expression and telomerase activity, thus enabling certain prostatic cells to resist apoptosis. The protein is Prostate androgen-regulated mucin-like protein 1 homolog (Parm1) of Mus musculus (Mouse).